Consider the following 534-residue polypeptide: Blue-light-activated protein (534 aa).

The region spanning 20 to 93 (GKDIFFAAVE…QSIRDAIAQR (74 aa)) is the PAS domain. S-4a-FMN cysteine is present on cysteine 70. Residues 94–148 (NDISAEIINYRKDGSSFWNALFISPVYNDAGDLIYFFASQLDISRRKDAEEALRQ) enclose the PAC domain. The 230-residue stretch at 161-390 (GIAHDFNNLL…TLRLYFPVDE (230 aa)) folds into the Histidine kinase domain. Residue histidine 164 is modified to Phosphohistidine; by autocatalysis. The 117-residue stretch at 411-527 (RILIVEDRPD…DLARKVRQVL (117 aa)) folds into the Response regulatory domain. A 4-aspartylphosphate modification is found at aspartate 461.

Post-translationally, FMN binds covalently to cysteine after exposure to blue light and this bond is spontaneously broken in the dark.

It catalyses the reaction ATP + protein L-histidine = ADP + protein N-phospho-L-histidine.. Photosensitive kinase and response regulator that is involved in increased bacterial virulence upon exposure to light. The chain is Blue-light-activated protein from Pseudomonas syringae pv. tomato (strain ATCC BAA-871 / DC3000).